We begin with the raw amino-acid sequence, 721 residues long: Glycine--tRNA ligase beta subunit (721 aa).

The protein belongs to the class-II aminoacyl-tRNA synthetase family. Tetramer of two alpha and two beta subunits.

The protein localises to the cytoplasm. The enzyme catalyses tRNA(Gly) + glycine + ATP = glycyl-tRNA(Gly) + AMP + diphosphate. This chain is Glycine--tRNA ligase beta subunit, found in Sinorhizobium medicae (strain WSM419) (Ensifer medicae).